We begin with the raw amino-acid sequence, 370 residues long: Ganglioside-induced differentiation-associated protein 1-like 1 (370 aa).

The GST N-terminal domain occupies 45–129; sequence ESLVLYHWTQ…YVERTFTGEH (85 aa). One can recognise a GST C-terminal domain in the interval 177–344; the sequence is PKYATAEIRR…RLVKRKPPSF (168 aa).

The protein belongs to the GST superfamily.

The polypeptide is Ganglioside-induced differentiation-associated protein 1-like 1 (Gdap1l1) (Mus musculus (Mouse)).